The chain runs to 197 residues: MPLPRAAFLLGLLLAAAAAESVRETETMDARWLDNVGSGDLPDDEDIGEFTPHLTSDEFDIDDTSGSGDYSDYDDAIYLTTVDTPAISDNYIPGDTERKMEGEKKNTMLDNEIIPDKASPVEANLSNKISMASTANSSIFERTEVLTALIAGGAVGLLFAVFLILLLVYRMKKKDEGSYDLGKKPIYKKAPTNEFYA.

The signal sequence occupies residues 1-19 (MPLPRAAFLLGLLLAAAAA). The Extracellular portion of the chain corresponds to 20-147 (ESVRETETMD…SIFERTEVLT (128 aa)). O-linked (Xyl...) (glycosaminoglycan) serine glycosylation is found at serine 38, serine 65, and serine 67. N-linked (GlcNAc...) asparagine glycosylation is found at asparagine 124 and asparagine 136. The chain crosses the membrane as a helical span at residues 148-168 (ALIAGGAVGLLFAVFLILLLV). Residues 169–197 (YRMKKKDEGSYDLGKKPIYKKAPTNEFYA) are Cytoplasmic-facing.

Belongs to the syndecan proteoglycan family. In terms of assembly, interacts with SDOS. In terms of processing, O-glycosylated; contains both chondroitin sulfate and heparan sulfate. Ser-38, Ser-65 and Ser-67 can all be modified by either chondroitin sulfate or heparan sulfate, and the protein exists in forms that contain only chondroitin sulfate, only heparan sulfate and both chondroitin sulfate and heparan sulfate.

It is found in the membrane. Cell surface proteoglycan which regulates exosome biogenesis in concert with SDCBP and PDCD6IP. This chain is Syndecan-4 (SDC4), found in Gallus gallus (Chicken).